A 195-amino-acid chain; its full sequence is Peptidyl-tRNA hydrolase (195 aa).

Tyr17 serves as a coordination point for tRNA. His22 serves as the catalytic Proton acceptor. TRNA-binding residues include Phe68, Asn70, and Asn116.

It belongs to the PTH family. Monomer.

It localises to the cytoplasm. It catalyses the reaction an N-acyl-L-alpha-aminoacyl-tRNA + H2O = an N-acyl-L-amino acid + a tRNA + H(+). Its function is as follows. Hydrolyzes ribosome-free peptidyl-tRNAs (with 1 or more amino acids incorporated), which drop off the ribosome during protein synthesis, or as a result of ribosome stalling. In terms of biological role, catalyzes the release of premature peptidyl moieties from peptidyl-tRNA molecules trapped in stalled 50S ribosomal subunits, and thus maintains levels of free tRNAs and 50S ribosomes. This Pectobacterium carotovorum subsp. carotovorum (strain PC1) protein is Peptidyl-tRNA hydrolase.